We begin with the raw amino-acid sequence, 457 residues long: Dihydrolipoyllysine-residue acetyltransferase component of pyruvate dehydrogenase complex, mitochondrial (457 aa).

The transit peptide at 1-30 (MLSAALRRRVLAPTHSALRTGFAAHVVRHY) directs the protein to the mitochondrion. The Lipoyl-binding domain maps to 36 to 112 (HQVIKMPALS…PVGSPIAVLV (77 aa)). The residue at position 77 (Lys77) is an N6-lipoyllysine. The disordered stretch occupies residues 129 to 168 (AGGDAAKPAAPKKEEKSESKSESASAPEPTPEPQQYQSQG). Over residues 139–149 (PKKEEKSESKS) the composition is skewed to basic and acidic residues. Position 148 is an N6-crotonyllysine (Lys148). The Peripheral subunit-binding (PSBD) domain occupies 179 to 216 (NISASAKRLAREKGISIDGLKGTGKNGQITEEDVKKAI). Residues His430 and Asp434 contribute to the active site.

The protein belongs to the 2-oxoacid dehydrogenase family. In terms of assembly, eukaryotic pyruvate dehydrogenase (PDH) complexes are organized as a core consisting of the oligomeric dihydrolipoamide acetyl-transferase (E2), around which are arranged multiple copies of pyruvate dehydrogenase (E1), dihydrolipoamide dehydrogenase (E3) and protein X (E3BP) bound by non-covalent bonds. Interacts with SIR5; the interaction is direct. (R)-lipoate is required as a cofactor. In terms of processing, decrotonylated at 'Lys-148' by SIR5, which inhibits the activity of the pyruvate dehydrogenase complex (PDC).

It is found in the mitochondrion matrix. It carries out the reaction N(6)-[(R)-dihydrolipoyl]-L-lysyl-[protein] + acetyl-CoA = N(6)-[(R)-S(8)-acetyldihydrolipoyl]-L-lysyl-[protein] + CoA. Functionally, the pyruvate dehydrogenase complex catalyzes the overall conversion of pyruvate to acetyl-CoA and CO(2). High pyruvate dehydrogenase complex activity is required for sufficient energy production during germination of conidia. The sequence is that of Dihydrolipoyllysine-residue acetyltransferase component of pyruvate dehydrogenase complex, mitochondrial from Fusarium oxysporum f. sp. lycopersici (strain 4287 / CBS 123668 / FGSC 9935 / NRRL 34936) (Fusarium vascular wilt of tomato).